Here is a 1361-residue protein sequence, read N- to C-terminus: Protein CFT1 (1361 aa).

The interval 455 to 493 (AAYNNEDDDDDDDDFNLYSDEENDQVNNKNDRTFGTNES) is disordered. A compositionally biased stretch (acidic residues) spans 459–478 (NEDDDDDDDDFNLYSDEEND). Positions 479 to 493 (QVNNKNDRTFGTNES) are enriched in polar residues.

This sequence belongs to the CFT1 family.

The protein resides in the nucleus. In terms of biological role, RNA-binding component of the cleavage and polyadenylation factor (CPF) complex, which plays a key role in polyadenylation-dependent pre-mRNA 3'-end formation and cooperates with cleavage factors including the CFIA complex and NAB4/CFIB. Involved in poly(A) site recognition. May be involved in coupling transcription termination and mRNA 3'-end formation. The chain is Protein CFT1 (CFT1) from Candida glabrata (strain ATCC 2001 / BCRC 20586 / JCM 3761 / NBRC 0622 / NRRL Y-65 / CBS 138) (Yeast).